A 293-amino-acid polypeptide reads, in one-letter code: Short-chain dehydrogenase/reductase PhomF' (293 aa).

NADP(+) contacts are provided by Ile-31 and Asn-102. The active-site Proton donor is Ser-175. Tyr-190, Lys-194, and Ser-225 together coordinate NADP(+). The active-site Proton acceptor is Tyr-190. The active-site Lowers pKa of active site Tyr is the Lys-194.

It belongs to the short-chain dehydrogenases/reductases (SDR) family.

In terms of biological role, short-chain dehydrogenase/reductase; part of the gene cluster that mediates the biosynthesis of the phomopsins, a group of hexapeptide mycotoxins which infects lupins and causes lupinosis disease in livestock. The role of phomF' within the phomopsins biosynthesis pathway has still to be determined. The pathway starts with the processing of the precursor phomA by several endopeptidases including kexin proteases as well as the cluster-specific S41 family peptidase phomP1 and the oligopeptidase phomG to produce 10 identical copies of the hexapeptide Tyr-Val-Ile-Pro-Ile-Asp. After being excised from the precursor peptide, the core peptides are cyclized and modified post-translationally by enzymes encoded within the gene cluster. The timing and order of proteolysis of the phomA precursor and PTMs are still unknown. Two tyrosinase-like enzymes, phomQ1 and phomQ2, catalyze the chlorination and hydroxylation of Tyr, respectively. PhomYb, is proposed to be involved in the construction of the macrocyclic structure. The other 4 ustYa family proteins may be involved in PTMs that generate the unique structure of phomopsin A. PhomYa is required for the hydroxylation of C-beta of Tyr. PhomYc, phomYd, and phomYe are responsible for the biosynthesis of 2,3-dehydroisoleucine (dIle), 2,3-dehydroaspartic acid (dAsp), and 3,4-dehydroproline (dPro), respectively. While dIle formation by phomYc is indispensable for the installation of dAsp by phomYd, the order of the other PTMs have not been elucidated yet. Most of the biosynthetic enzymes likely have broad substrate specificity, and thus, there might be a metabolic grid from a precursor to phomopsin A. The enzyme(s) responsible for the biosynthesis of 3,4-dehydrovaline (dVal) have also not been identified yet. Finally, phomM acts as an S-adenosylmethionine-dependent alpha-N-methyltransferase that catalyzes two successive N-methylation reactions, converting N-desmethyl-phomopsin A to phomopsin A and phomopsin A further to an N,N-dimethylated congener called phomopsin E. In Diaporthe leptostromiformis (Lupinosis disease fungus), this protein is Short-chain dehydrogenase/reductase PhomF'.